Here is a 177-residue protein sequence, read N- to C-terminus: Cytochrome c-type biogenesis protein CcmE (177 aa).

Residues Met1–Arg7 are Cytoplasmic-facing. The helical; Signal-anchor for type II membrane protein transmembrane segment at Leu8 to Ala28 threads the bilayer. Residues Met29–Arg177 lie on the Periplasmic side of the membrane. Heme contacts are provided by His122 and Tyr126. Positions Asp133 to Arg177 are disordered. Residues Gly145–Thr166 show a composition bias toward basic and acidic residues.

Belongs to the CcmE/CycJ family.

It localises to the cell inner membrane. Heme chaperone required for the biogenesis of c-type cytochromes. Transiently binds heme delivered by CcmC and transfers the heme to apo-cytochromes in a process facilitated by CcmF and CcmH. The polypeptide is Cytochrome c-type biogenesis protein CcmE (Methylorubrum extorquens (strain PA1) (Methylobacterium extorquens)).